Consider the following 658-residue polypeptide: Carnitine O-palmitoyltransferase 2, mitochondrial (658 aa).

A mitochondrion-targeting transit peptide spans 1-25 (MMPRLLFRAWPRCPSLVLGAPSRPL). Residues 26 to 178 (SAVSGPDDYL…GLLEPEVFHL (153 aa)) lie on the Mitochondrial matrix side of the membrane. N6-succinyllysine is present on residues Lys-69 and Lys-85. Positions 179 to 208 (NPSKSDTDAFKRLIRFVPPSLSWYGAYLVN) form an intramembrane region, note=Mitochondrial inner membrane. The Mitochondrial matrix segment spans residues 209 to 658 (AYPLDMSQYF…DALEGKAIKT (450 aa)). Lys-239 carries the post-translational modification N6-acetyllysine; alternate. The residue at position 239 (Lys-239) is an N6-succinyllysine; alternate. Lys-305 is subject to N6-acetyllysine. The active-site Proton acceptor is His-372. N6-succinyllysine occurs at positions 424 and 439. Residue 452 to 464 (GKEFLKKKQLSPD) participates in CoA binding. Residues Tyr-486, Ser-488, and Thr-499 each coordinate (R)-carnitine. An N6-acetyllysine; alternate mark is found at Lys-510 and Lys-544. N6-succinyllysine; alternate is present on residues Lys-510 and Lys-544.

Belongs to the carnitine/choline acetyltransferase family.

Its subcellular location is the mitochondrion inner membrane. The enzyme catalyses (R)-carnitine + hexadecanoyl-CoA = O-hexadecanoyl-(R)-carnitine + CoA. It carries out the reaction octanoyl-CoA + (R)-carnitine = O-octanoyl-(R)-carnitine + CoA. The catalysed reaction is decanoyl-CoA + (R)-carnitine = O-decanoyl-(R)-carnitine + CoA. It catalyses the reaction dodecanoyl-CoA + (R)-carnitine = O-dodecanoyl-R-carnitine + CoA. The enzyme catalyses tetradecanoyl-CoA + (R)-carnitine = O-tetradecanoyl-(R)-carnitine + CoA. It carries out the reaction (R)-carnitine + octadecanoyl-CoA = O-octadecanoyl-(R)-carnitine + CoA. The catalysed reaction is eicosanoyl-CoA + (R)-carnitine = O-eicosanoyl-(R)-carnitine + CoA. It catalyses the reaction (9Z)-tetradecenoyl-CoA + (R)-carnitine = O-(9Z)-tetradecenoyl-(R)-carnitine + CoA. The enzyme catalyses (5Z)-tetradecenoyl-CoA + (R)-carnitine = O-(5Z)-tetradecenoyl-(R)-carnitine + CoA. It carries out the reaction (R)-carnitine + (9Z)-octadecenoyl-CoA = O-(9Z)-octadecenoyl-(R)-carnitine + CoA. The catalysed reaction is 4,8-dimethylnonanoyl-CoA + (R)-carnitine = O-4,8-dimethylnonanoyl-(R)-carnitine + CoA. It functions in the pathway lipid metabolism; fatty acid beta-oxidation. Involved in the intramitochondrial synthesis of acylcarnitines from accumulated acyl-CoA metabolites. Reconverts acylcarnitines back into the respective acyl-CoA esters that can then undergo beta-oxidation, an essential step for the mitochondrial uptake of long-chain fatty acids and their subsequent beta-oxidation in the mitochondrion. Active with medium (C8-C12) and long-chain (C14-C18) acyl-CoA esters. The protein is Carnitine O-palmitoyltransferase 2, mitochondrial of Rattus norvegicus (Rat).